The sequence spans 113 residues: MTEIVADKTVEVVKNAIETADGALDLYNKYLDQVIPWQTFDETIKELSRFKQEYSQAASVLVGDIKTLLMDSQDKYFEATQTVYEWCGVATQLLAAYILLFDEYNEKKASAPH.

It belongs to the hemolysin E family.

The sequence is that of Putative hemolysin E-like protein from Shigella flexneri.